A 445-amino-acid polypeptide reads, in one-letter code: Exodeoxyribonuclease 7 large subunit (445 aa).

This sequence belongs to the XseA family. Heterooligomer composed of large and small subunits.

Its subcellular location is the cytoplasm. The enzyme catalyses Exonucleolytic cleavage in either 5'- to 3'- or 3'- to 5'-direction to yield nucleoside 5'-phosphates.. In terms of biological role, bidirectionally degrades single-stranded DNA into large acid-insoluble oligonucleotides, which are then degraded further into small acid-soluble oligonucleotides. This Staphylococcus aureus (strain JH1) protein is Exodeoxyribonuclease 7 large subunit.